Consider the following 129-residue polypeptide: uncharacterized protein (129 aa).

C2H2-type zinc fingers lie at residues 75–99 (FVCP…YTEH) and 101–124 (KVCP…CKKH).

Its function is as follows. Essential for virus function. This is an uncharacterized protein from Saccharolobus solfataricus (Sulfolobus solfataricus).